Reading from the N-terminus, the 273-residue chain is Glutamate 5-kinase (273 aa).

Lys-15 is an ATP binding site. Positions 55, 142, and 158 each coordinate substrate. ATP is bound by residues 178–179 and 220–226; these read SD and TGGMLSK.

Belongs to the glutamate 5-kinase family.

Its subcellular location is the cytoplasm. The enzyme catalyses L-glutamate + ATP = L-glutamyl 5-phosphate + ADP. Its pathway is amino-acid biosynthesis; L-proline biosynthesis; L-glutamate 5-semialdehyde from L-glutamate: step 1/2. Functionally, catalyzes the transfer of a phosphate group to glutamate to form L-glutamate 5-phosphate. This chain is Glutamate 5-kinase, found in Streptococcus pyogenes serotype M18 (strain MGAS8232).